Consider the following 109-residue polypeptide: uncharacterized protein (109 aa).

The next 2 membrane-spanning stretches (helical) occupy residues 19–39 (LELV…CLIP) and 53–73 (YFID…FYPF).

It is found in the membrane. This is an uncharacterized protein from Saccharomyces cerevisiae (strain ATCC 204508 / S288c) (Baker's yeast).